Reading from the N-terminus, the 33-residue chain is Protamine TP17 (33 aa).

Positions 1–33 are disordered; sequence MPRRRRSSSRPVRRRRRPRVSRRRRRRGRRRRR.

Testis.

It is found in the nucleus. The protein resides in the chromosome. Functionally, protamines substitute for histones in the chromatin of sperm during the haploid phase of spermatogenesis. They compact sperm DNA into a highly condensed, stable and inactive complex. The chain is Protamine TP17 from Oncorhynchus mykiss (Rainbow trout).